The primary structure comprises 327 residues: Phenylalanine--tRNA ligase alpha subunit (327 aa).

Mg(2+) is bound at residue Glu-252.

Belongs to the class-II aminoacyl-tRNA synthetase family. Phe-tRNA synthetase alpha subunit type 1 subfamily. In terms of assembly, tetramer of two alpha and two beta subunits. Requires Mg(2+) as cofactor.

It is found in the cytoplasm. The catalysed reaction is tRNA(Phe) + L-phenylalanine + ATP = L-phenylalanyl-tRNA(Phe) + AMP + diphosphate + H(+). This is Phenylalanine--tRNA ligase alpha subunit from Escherichia coli O127:H6 (strain E2348/69 / EPEC).